A 164-amino-acid chain; its full sequence is Large ribosomal subunit protein uL11 (164 aa).

Belongs to the universal ribosomal protein uL11 family. Part of the ribosomal stalk of the 50S ribosomal subunit. Interacts with L10 and the large rRNA to form the base of the stalk. L10 forms an elongated spine to which L12 dimers bind in a sequential fashion forming a multimeric L10(L12)X complex.

Forms part of the ribosomal stalk which helps the ribosome interact with GTP-bound translation factors. The sequence is that of Large ribosomal subunit protein uL11 from Pyrococcus horikoshii (strain ATCC 700860 / DSM 12428 / JCM 9974 / NBRC 100139 / OT-3).